Here is a 527-residue protein sequence, read N- to C-terminus: Sensory neuron membrane protein 1 (527 aa).

Over 1 to 10 (MQLQKPLKIG) the chain is Cytoplasmic. A helical membrane pass occupies residues 11-31 (LGMMGAGLFGIIFGWVLFPVI). The Extracellular portion of the chain corresponds to 32–456 (LKSQLKKEMA…LKNQLFIPKR (425 aa)). Residues Asn-67 and Asn-229 are each glycosylated (N-linked (GlcNAc...) asparagine). Cystine bridges form between Cys-268/Cys-333, Cys-297/Cys-352, and Cys-335/Cys-341. Residue Asn-440 is glycosylated (N-linked (GlcNAc...) asparagine). Residues 457–477 (IVSVVKWLLAGVGFVGLVGSL) traverse the membrane as a helical segment. Topologically, residues 478–527 (VYQFKGKMINFALSPSSAPVTKVNPEINQQNQPKDISIIGESQNPPKVDM) are cytoplasmic.

Belongs to the CD36 family. As to expression, principal component of the olfactory cilia membrane. Localizes to the antennal tissue with two to three fold higher expression in males compared to females.

The protein localises to the cell membrane. In terms of biological role, plays an olfactory role that is not restricted to pheromone sensitivity. In Ostrinia nubilalis (European corn borer), this protein is Sensory neuron membrane protein 1.